The primary structure comprises 357 residues: uncharacterized protein (357 aa).

The N-terminal stretch at 1–19 (MKRILSFIFIILFFNSSYA) is a signal peptide.

This is an uncharacterized protein from Rickettsia prowazekii (strain Madrid E).